A 709-amino-acid polypeptide reads, in one-letter code: MYVVNPQLVVLVDKDQEILDVLYLTLYDGIDERSSMYYFIKNHLRVPMDRVRVLKKHIILTLKISQVKGYICDLLNIDEEIIIYSHKNNLEYSYVDNTTFNPFTMTQRKTLLKSKSFLYNVYVDACNFLVIWVAKAADTMVKELGSYEEVDANVLKFESRLIEMFPDLDLDFTVESKFNNVFRTNLKMTGLKNIVLSNTDKKILFIKSDEYFINLSGNHFVINDESLNLSIWDDDGSLAISSDGNTITVNNVKLFTDMIPNNNVQMERIKSDITYKVKLSTPITSKVKLDIETSFIFIETATNNILLSVDKKISIILAKNHISIKVKNHIPNIEKYFTFLVVFINRLFNTVKQSMDFTKIETIYWSRICQNTKDKNRKPVIISSLEPDMLKVSDNFYKSPTKEVFVNNNEVMFTCDDKTGKYNNIGFLAIFYKLQKICIPCCFLKNQSHTDTFMACVHNKQTDKNIISPYILNYGKVVTDSKIAFLPPIFNDFFNSDLSISLESDNKRLKSTKGYHVIRSCLHNCRYYTLKRIRTKNDIIQFVNTENVTLIANDIVYFPMKYSSINNKIYILVQEIVHEIVIAKKEEDKDMIYFEELRTNKLRDMFPYKVKTVDIKEQNGLKLTTDGFYVDGELFTEPLSTKRSVFMDNISTQNNPIVKYFNSVFKYVVTDNKEIFIKTWVINTMLKLGIGKDYTHIQIKSILEKYYKL.

The protein belongs to the poxviridae VETF large subunit family. In terms of assembly, heterodimer of a 70 kDa and a 82 kDa subunit. Part of the early transcription complex composed of ETF, RAP94, and the DNA-directed RNA polymerase.

Its subcellular location is the virion. Acts with RNA polymerase to initiate transcription from early gene promoters. Is recruited by the RPO-associated protein of 94 kDa (RAP94) to form the early transcription complex, which also contains the core RNA polymerase. ETF heterodimer binds to early gene promoters. The chain is Early transcription factor 82 kDa subunit (VETFL) from Vertebrata (FPV).